The primary structure comprises 1571 residues: Phospholipid-transporting ATPase DNF1 (1571 aa).

The segment at 1 to 94 (MSGTFHGDGH…TPKLNNGSGT (94 aa)) is disordered. Topologically, residues 1 to 214 (MSGTFHGDGH…TFLPKNILFQ (214 aa)) are cytoplasmic. Basic and acidic residues predominate over residues 29–40 (EDTHIAPTHFDD). The segment covering 42 to 56 (ATSNKYSRPQVSFND) has biased composition (polar residues). Ser53 bears the Phosphoserine mark. A compositionally biased stretch (acidic residues) spans 66-76 (AEEFTFNDDTE). At Thr70 the chain carries Phosphothreonine. Residues 80–93 (HSFQPTPKLNNGSG) are compositionally biased toward polar residues. Residue Ser81 is modified to Phosphoserine. Position 85 is a phosphothreonine (Thr85). Ser92 is modified (phosphoserine). Thr94 carries the phosphothreonine modification. Ser104 bears the Phosphoserine mark. A Phosphothreonine modification is found at Thr109. Residues 215-235 (FHNFANVYFLVLIILGAFQIF) traverse the membrane as a helical segment. The involved in phosphatidylcholine substrate selection stretch occupies residues 234–241 (IFGVTNPG). Residues 236-239 (GVTN) lie on the Extracellular side of the membrane. The helical transmembrane segment at 240-260 (PGLSAVPLVVIVIITAIKDAI) threads the bilayer. Residues 261–553 (EDSRRTVLDL…RISRELNFSV (293 aa)) are Cytoplasmic-facing. Phosphoserine occurs at positions 351, 354, 358, and 365. Tyr368 carries the post-translational modification Phosphotyrosine. A helical transmembrane segment spans residues 554-574 (VINFVLLFILCFVSGIANGVY). Residues 575–594 (YDKKGRSRFSYEFGTIAGSA) lie on the Extracellular side of the membrane. Positions 586–590 (EFGTI) are involved in phosphatidylcholine substrate selection. The helical transmembrane segment at 595–615 (ATNGFVSFWVAVILYQSLVPI) threads the bilayer. At 616 to 1188 (SLYISVEIIK…WSYKRLAEMI (573 aa)) the chain is on the cytoplasmic side. Asp667 (4-aspartylphosphate intermediate) is an active-site residue. Residues Asp667, Lys668, Thr669, Glu801, Phe842, Ser844, Lys847, and Lys871 each contribute to the ATP site. Asp667 lines the Mg(2+) pocket. Thr669 lines the Mg(2+) pocket. A Glycyl lysine isopeptide (Lys-Gly) (interchain with G-Cter in ubiquitin) cross-link involves residue Lys895. 7 residues coordinate ATP: Arg909, Thr910, Thr989, Gly990, Asp991, Arg1104, and Lys1110. Mg(2+) is bound at residue Asp1130. Positions 1133 and 1134 each coordinate ATP. Asp1134 lines the Mg(2+) pocket. The helical transmembrane segment at 1189–1209 (PEFFYKNMIFALALFWYGIYN) threads the bilayer. The Extracellular portion of the chain corresponds to 1210 to 1219 (DFDGSYLYEY). Residues 1220-1240 (TYMMFYNLAFTSLPVIFLGIL) traverse the membrane as a helical segment. Topologically, residues 1241-1270 (DQDVNDTISLVVPQLYRVGILRKEWNQRKF) are cytoplasmic. Residues 1271-1291 (LWYMLDGLYQSIICFFFPYLV) traverse the membrane as a helical segment. The Extracellular segment spans residues 1292-1307 (YHKNMIVTSNGLGLDH). A helical membrane pass occupies residues 1308 to 1328 (RYFVGVYVTTIAVISCNTYVL). Residues 1329-1334 (LHQYRW) are Cytoplasmic-facing. Residues 1335–1355 (DWFSGLFIALSCLVVFAWTGI) form a helical membrane-spanning segment. Topologically, residues 1356–1375 (WSSAIASREFFKAAARIYGA) are extracellular. A helical membrane pass occupies residues 1376 to 1396 (PSFWAVFFVAVLFCLLPRFTY). An a 1,2-diacyl-sn-glycero-3-phospho-L-serine-binding site is contributed by Arg1393. The Cytoplasmic segment spans residues 1397 to 1571 (DSFQKFFYPT…ASLIGTQQNN (175 aa)). A Phosphoserine modification is found at Ser1506. The residue at position 1551 (Thr1551) is a Phosphothreonine. Ser1552 and Ser1563 each carry phosphoserine.

It belongs to the cation transport ATPase (P-type) (TC 3.A.3) family. Type IV subfamily. In terms of assembly, component of a flippase complex consisting of DNF1 and LEM3. Interacts with LEM3; the interaction is direct and required for their mutual export from the endoplasmic reticulum. Requires Mg(2+) as cofactor. In terms of processing, phosphorylated by FPK1 and KIN82.

It localises to the cell membrane. It is found in the endosome membrane. The protein resides in the golgi apparatus. Its subcellular location is the trans-Golgi network membrane. The protein localises to the cell septum. It localises to the bud. The enzyme catalyses ATP + H2O + phospholipidSide 1 = ADP + phosphate + phospholipidSide 2.. It carries out the reaction a 1,2-diacyl-sn-glycero-3-phosphoethanolamine(out) + ATP + H2O = a 1,2-diacyl-sn-glycero-3-phosphoethanolamine(in) + ADP + phosphate + H(+). The catalysed reaction is a 1,2-diacyl-sn-glycero-3-phosphocholine(out) + ATP + H2O = a 1,2-diacyl-sn-glycero-3-phosphocholine(in) + ADP + phosphate + H(+). It catalyses the reaction a beta-D-glucosyl-(1&lt;-&gt;1')-N-acylsphing-4-enine(out) + ATP + H2O = a beta-D-glucosyl-(1&lt;-&gt;1')-N-acylsphing-4-enine(in) + ADP + phosphate + H(+). The enzyme catalyses a 1,2-diacyl-sn-glycero-3-phospho-L-serine(out) + ATP + H2O = a 1,2-diacyl-sn-glycero-3-phospho-L-serine(in) + ADP + phosphate + H(+). Catalytic component of a P4-ATPase flippase complex which catalyzes the hydrolysis of ATP coupled to the transport of glucosylceramide, phosphatidylcholine, phosphatidylethanolamine, and small amounts of phosphatidylserine from the lumenal to the cytosolic leaflet of the cell membrane and ensures the maintenance of asymmetric distribution of phospholipids. Does not appear to transport sphingomyelin, inositol phosphoceramide, or phosphatidic acid. Required for efficient endocytosis. This chain is Phospholipid-transporting ATPase DNF1, found in Saccharomyces cerevisiae (strain ATCC 204508 / S288c) (Baker's yeast).